Reading from the N-terminus, the 232-residue chain is uncharacterized protein (232 aa).

This is an uncharacterized protein from Aedes vexans (Inland floodwater mosquito).